Consider the following 121-residue polypeptide: UPF0145 protein SAV_4658 (121 aa).

Belongs to the UPF0145 family.

This chain is UPF0145 protein SAV_4658, found in Streptomyces avermitilis (strain ATCC 31267 / DSM 46492 / JCM 5070 / NBRC 14893 / NCIMB 12804 / NRRL 8165 / MA-4680).